The following is a 102-amino-acid chain: Small ribosomal subunit protein uS10 (102 aa).

It belongs to the universal ribosomal protein uS10 family. Part of the 30S ribosomal subunit.

Involved in the binding of tRNA to the ribosomes. The polypeptide is Small ribosomal subunit protein uS10 (Bifidobacterium animalis subsp. lactis (strain AD011)).